A 104-amino-acid chain; its full sequence is Inner membrane protein YjcH (104 aa).

The Cytoplasmic portion of the chain corresponds to 1 to 24; it reads MNGTIYQRIEDNAHFRELVEKRQR. The chain crosses the membrane as a helical span at residues 25–47; it reads FATILSIIMLAVYIGFILLIAFA. The Periplasmic portion of the chain corresponds to 48–61; that stretch reads PGWLGTPLNPNTSV. Residues 62–84 traverse the membrane as a helical segment; the sequence is TRGIPIGVGVIVISFVLTGIYIW. Residues 85-104 are Cytoplasmic-facing; sequence RANGEFDRLNNEVLHEVQAS.

The protein resides in the cell inner membrane. The chain is Inner membrane protein YjcH (yjcH) from Escherichia coli (strain K12).